Consider the following 689-residue polypeptide: Elongation factor G (689 aa).

The tr-type G domain maps to 8–282; the sequence is LNTRNIGIMA…AVVDYLPSPL (275 aa). Residues 17–24, 81–85, and 135–138 each bind GTP; these read AHIDAGKT, DTPGH, and NKMD.

This sequence belongs to the TRAFAC class translation factor GTPase superfamily. Classic translation factor GTPase family. EF-G/EF-2 subfamily.

The protein localises to the cytoplasm. Its function is as follows. Catalyzes the GTP-dependent ribosomal translocation step during translation elongation. During this step, the ribosome changes from the pre-translocational (PRE) to the post-translocational (POST) state as the newly formed A-site-bound peptidyl-tRNA and P-site-bound deacylated tRNA move to the P and E sites, respectively. Catalyzes the coordinated movement of the two tRNA molecules, the mRNA and conformational changes in the ribosome. This chain is Elongation factor G, found in Mycoplasma mycoides subsp. mycoides SC (strain CCUG 32753 / NCTC 10114 / PG1).